The chain runs to 217 residues: MSQVSISKFGNPIERVDRAIDALVSGRGVLLVDDEDRENEGDLIFPAGNITAEQVALLIRECSGIICLCLPPERIEQLGLPQMVTCNTSAYQTAFTISIEAAEGVTTGVSAADRATTIRCAAALDARPEDIHSPGHVFPLRAVEQGVLGRRGHTEGTVDLMRLAGLAPAGVLCELTNVDGTMARLPQIITFADEHGFPVLSIEDIAAYRSQPIKKSA.

D-ribulose 5-phosphate-binding positions include 37-38 (RE), Asp42, 150-154 (RRGHT), and Glu174. Glu38 is a Mg(2+) binding site. Residue His153 participates in Mg(2+) binding.

It belongs to the DHBP synthase family. In terms of assembly, homodimer. Mg(2+) serves as cofactor. Requires Mn(2+) as cofactor.

It catalyses the reaction D-ribulose 5-phosphate = (2S)-2-hydroxy-3-oxobutyl phosphate + formate + H(+). Its pathway is cofactor biosynthesis; riboflavin biosynthesis; 2-hydroxy-3-oxobutyl phosphate from D-ribulose 5-phosphate: step 1/1. Catalyzes the conversion of D-ribulose 5-phosphate to formate and 3,4-dihydroxy-2-butanone 4-phosphate. In Desulforapulum autotrophicum (strain ATCC 43914 / DSM 3382 / VKM B-1955 / HRM2) (Desulfobacterium autotrophicum), this protein is 3,4-dihydroxy-2-butanone 4-phosphate synthase.